Consider the following 3333-residue polypeptide: Laminin subunit alpha-3 (3333 aa).

Residues 1–35 (MAAAARPRGRALGPVLPPTPLLLLVLRVLPACGAT) form the signal peptide. In terms of domain architecture, Laminin N-terminal spans 43–298 (AGLSLHPTYF…SIKDISIGGQ (256 aa)). N-linked (GlcNAc...) asparagine glycosylation is found at Asn142 and Asn242. Positions 298–728 (QCVCNGHAEV…NNYYFPDLHH (431 aa)) are domain V. Disulfide bonds link Cys299–Cys308, Cys301–Cys319, Cys321–Cys330, Cys333–Cys353, Cys356–Cys365, Cys358–Cys390, Cys393–Cys402, Cys405–Cys423, Cys426–Cys436, Cys428–Cys443, Cys445–Cys454, Cys457–Cys467, Cys491–Cys503, Cys493–Cys509, Cys511–Cys520, Cys523–Cys533, Cys536–Cys548, Cys538–Cys555, Cys557–Cys566, Cys569–Cys586, Cys601–Cys610, Cys613–Cys628, Cys631–Cys645, Cys633–Cys652, Cys654–Cys663, Cys666–Cys681, Cys684–Cys696, Cys686–Cys703, and Cys705–Cys714. Laminin EGF-like domains follow at residues 299–355 (CVCN…ECEA), 356–425 (CNCH…GCIP), 426–469 (CSCD…FCLR), 491–535 (CDCN…ICQA), 536–588 (CWCS…ACDP), 590–630 (GTIN…GCSE), 631–683 (CKCH…GCQG), and 684–728 (CQCD…DLHH). Residues 796–1265 (TEAVSGHITI…VAFYHKGALP (470 aa)) form a domain IV 1 (domain IV B) region. Cystine bridges form between Cys1266–Cys1278, Cys1268–Cys1285, Cys1287–Cys1296, Cys1299–Cys1309, Cys1312–Cys1319, Cys1314–Cys1326, Cys1328–Cys1337, Cys1340–Cys1353, Cys1356–Cys1371, Cys1358–Cys1378, Cys1380–Cys1389, Cys1392–Cys1402, Cys1405–Cys1417, Cys1407–Cys1424, Cys1426–Cys1435, and Cys1438–Cys1453. 4 consecutive Laminin EGF-like domains span residues 1266 to 1311 (CECH…RCKP), 1312 to 1355 (CSCG…GCEG), 1356 to 1404 (CNCS…ECVP), and 1405 to 1455 (CNCN…GCTS). Residues 1266–1465 (CECHPTGATG…CFCFGVNNQC (200 aa)) are domain III B. A Laminin IV type A domain is found at 1476 to 1653 (VDMLGWHLET…SGRIALAVEI (178 aa)). Residues 1654-1821 (CACPPAYAGD…DSSPAEECDD (168 aa)) are domain III A. 8 disulfides stabilise this stretch: Cys1687-Cys1696, Cys1689-Cys1703, Cys1706-Cys1715, Cys1718-Cys1731, Cys1734-Cys1746, Cys1736-Cys1755, Cys1757-Cys1766, and Cys1769-Cys1784. Laminin EGF-like domains lie at 1687-1733 (CNCN…SCRA) and 1734-1786 (CPCP…SCQP). One can recognise a Laminin EGF-like 15; truncated domain in the interval 1787–1821 (CSCNSNGQLGSCHPLTGDCINQEPKDSSPAEECDD). Positions 1822 to 2389 (CDSCVMTLLN…ARDAASKVAV (568 aa)) are domain II and I. 2 coiled-coil regions span residues 1852 to 1941 (ASAG…KNVI) and 1987 to 2169 (KHLR…DELV). The short motif at 2278 to 2280 (RGD) is the Cell attachment site element. Residues 2322-2388 (RTQNEDFKKA…QARDAASKVA (67 aa)) adopt a coiled-coil conformation. Asn2365, Asn2502, and Asn2584 each carry an N-linked (GlcNAc...) asparagine glycan. 5 Laminin G-like domains span residues 2390 to 2591 (PMRF…VEPC), 2598 to 2760 (SDKN…TKKC), 2767 to 2927 (VRSA…LGGC), 2986 to 3150 (ALQF…VSSC), and 3157 to 3330 (KGIY…LNGC). 5 disulfides stabilise this stretch: Cys2561-Cys2591, Cys2737-Cys2760, Cys2895-Cys2927, Cys3127-Cys3150, and Cys3302-Cys3330.

As to quaternary structure, laminin is a complex glycoprotein, consisting of three different polypeptide chains (alpha, beta, gamma), which are bound to each other by disulfide bonds into a cross-shaped molecule comprising one long and three short arms with globules at each end. Alpha-3 is a subunit of laminin-5 (laminin-332 or epiligrin/kalinin/nicein), laminin-6 (laminin-311 or K-laminin) and laminin-7 (laminin-321 or KS-laminin). Skin; respiratory, urinary, and digestive epithelia and in other specialized tissues with prominent secretory or protective functions. Epithelial basement membrane, and epithelial cell tongue that migrates into a wound bed. A differential and focal expression of the subunit alpha-3 is observed in the CNS.

Its subcellular location is the secreted. The protein localises to the extracellular space. It localises to the extracellular matrix. The protein resides in the basement membrane. Binding to cells via a high affinity receptor, laminin is thought to mediate the attachment, migration and organization of cells into tissues during embryonic development by interacting with other extracellular matrix components. In terms of biological role, laminin-5 is thought to be involved in (1) cell adhesion via integrin alpha-3/beta-1 in focal adhesion and integrin alpha-6/beta-4 in hemidesmosomes, (2) signal transduction via tyrosine phosphorylation of pp125-FAK and p80, (3) differentiation of keratinocytes. The sequence is that of Laminin subunit alpha-3 (LAMA3) from Homo sapiens (Human).